The following is a 270-amino-acid chain: uncharacterized protein (270 aa).

The HTH lysR-type domain maps to 1–50 (LTEVVKAQSFTKAAENLYTSQPSISRDIKRLENDYDVKVFEFKHSKMTLT). Positions 10–29 (FTKAAENLYTSQPSISRDIK) form a DNA-binding region, H-T-H motif.

It belongs to the LysR transcriptional regulatory family.

This is an uncharacterized protein from Staphylococcus xylosus.